The primary structure comprises 236 residues: Phosphoribosylaminoimidazole-succinocarboxamide synthase (236 aa).

It belongs to the SAICAR synthetase family.

It carries out the reaction 5-amino-1-(5-phospho-D-ribosyl)imidazole-4-carboxylate + L-aspartate + ATP = (2S)-2-[5-amino-1-(5-phospho-beta-D-ribosyl)imidazole-4-carboxamido]succinate + ADP + phosphate + 2 H(+). It participates in purine metabolism; IMP biosynthesis via de novo pathway; 5-amino-1-(5-phospho-D-ribosyl)imidazole-4-carboxamide from 5-amino-1-(5-phospho-D-ribosyl)imidazole-4-carboxylate: step 1/2. The chain is Phosphoribosylaminoimidazole-succinocarboxamide synthase from Campylobacter jejuni subsp. doylei (strain ATCC BAA-1458 / RM4099 / 269.97).